We begin with the raw amino-acid sequence, 152 residues long: Protein NrdI (152 aa).

It belongs to the NrdI family.

Functionally, probably involved in ribonucleotide reductase function. This chain is Protein NrdI, found in Mycobacterium sp. (strain JLS).